Here is an 899-residue protein sequence, read N- to C-terminus: AP-3 complex subunit delta (899 aa).

HEAT repeat units follow at residues 37 to 74, 155 to 192, 194 to 229, 231 to 267, 268 to 305, 308 to 344, 345 to 382, 384 to 428, 480 to 518, 536 to 580, 590 to 613, and 614 to 656; these read QSPE…KLTY, ELAR…QYPE, LRDN…HNPQ, FIQL…IEPK, LRVK…LNSD, DSAV…KINT, DFIA…EDNL, DFVQ…ITAM, RTLA…LLDN, ELQQ…LIIS, SEAL…SLPL, and LLTE…TESE. Disordered stretches follow at residues 668 to 701, 741 to 768, 782 to 801, and 849 to 899; these read DGIV…PTHE, NLSN…KKKK, GVNT…SARN, and AAEE…LTTE. Positions 743–759 are enriched in low complexity; the sequence is SNSKPSSSGSLVRLSSE. Residues 841–862 adopt a coiled-coil conformation; sequence QRLLDESAAAEEEVVVVKKKKR. Over residues 857 to 880 the composition is skewed to basic residues; the sequence is VKKKKRSKDGSKSSKKKSRSKSKP.

It belongs to the adaptor complexes large subunit family. Adaptor protein complex 3 (AP-3) is a heterotetramer composed of 2 large adaptins (APL5 and APL6), a medium adaptin (APM3) and a small adaptin (APS3).

The protein localises to the golgi apparatus. Its subcellular location is the cytoplasmic vesicle. It is found in the clathrin-coated vesicle membrane. In terms of biological role, part of the AP-3 complex, an adaptor-related complex which is not clathrin-associated. The complex is associated with the Golgi region as well as more peripheral structures. It facilitates the budding of vesicles from the Golgi membrane and may be directly involved in trafficking to the vacuole. The sequence is that of AP-3 complex subunit delta (APL5) from Eremothecium gossypii (strain ATCC 10895 / CBS 109.51 / FGSC 9923 / NRRL Y-1056) (Yeast).